The primary structure comprises 1417 residues: DNA-directed RNA polymerase subunit beta' (1417 aa).

Zn(2+) is bound by residues Cys68, Cys70, Cys83, and Cys86. Residues Asp458, Asp460, and Asp462 each coordinate Mg(2+). Zn(2+) contacts are provided by Cys811, Cys884, Cys891, and Cys894.

This sequence belongs to the RNA polymerase beta' chain family. As to quaternary structure, the RNAP catalytic core consists of 2 alpha, 1 beta, 1 beta' and 1 omega subunit. When a sigma factor is associated with the core the holoenzyme is formed, which can initiate transcription. Mg(2+) serves as cofactor. It depends on Zn(2+) as a cofactor.

It catalyses the reaction RNA(n) + a ribonucleoside 5'-triphosphate = RNA(n+1) + diphosphate. In terms of biological role, DNA-dependent RNA polymerase catalyzes the transcription of DNA into RNA using the four ribonucleoside triphosphates as substrates. This Francisella tularensis subsp. tularensis (strain FSC 198) protein is DNA-directed RNA polymerase subunit beta'.